A 305-amino-acid chain; its full sequence is Putative lipid kinase SAB0675c (305 aa).

The DAGKc domain occupies 3 to 139; sequence NKYTHGVLFY…YDVIKINNQY (137 aa). ATP-binding positions include Ser-44, 74-80, and Thr-101; that span reads GDGTVNE. Ser-220, Asp-223, and Glu-225 together coordinate Mg(2+). The active-site Proton acceptor is Glu-281.

Belongs to the diacylglycerol/lipid kinase family. It depends on Mg(2+) as a cofactor.

Its function is as follows. May catalyze the ATP-dependent phosphorylation of lipids other than diacylglycerol (DAG). The sequence is that of Putative lipid kinase SAB0675c from Staphylococcus aureus (strain bovine RF122 / ET3-1).